The following is a 363-amino-acid chain: Neutral protease 2 homolog NFIA_102630 (363 aa).

The signal sequence occupies residues 1 to 19; the sequence is MKVTVLASAILALINGALA. The propeptide occupies 20–172; it reads LPANAPTLDV…PQAIKLLDRR (153 aa). 2 disulfides stabilise this stretch: C178-C250 and C257-C275. H300 lines the Zn(2+) pocket. The active site involves E301. Zn(2+) contacts are provided by H304 and D315.

Belongs to the peptidase M35 family. Zn(2+) serves as cofactor.

Its subcellular location is the secreted. The catalysed reaction is Preferential cleavage of bonds with hydrophobic residues in P1'. Also 3-Asn-|-Gln-4 and 8-Gly-|-Ser-9 bonds in insulin B chain.. Secreted metalloproteinase that allows assimilation of proteinaceous substrates. Shows high activities on basic nuclear substrates such as histone and protamine. The polypeptide is Neutral protease 2 homolog NFIA_102630 (Neosartorya fischeri (strain ATCC 1020 / DSM 3700 / CBS 544.65 / FGSC A1164 / JCM 1740 / NRRL 181 / WB 181) (Aspergillus fischerianus)).